The chain runs to 336 residues: D-alanine--D-alanine ligase (336 aa).

In terms of domain architecture, ATP-grasp spans 124–330; that stretch reads KMWFSALGIP…FTEYLSLVIN (207 aa). 154–209 lines the ATP pocket; that stretch reads ALENWGSIFVKAASQGSSVGCYKVDDSSKVADVLKDAFGYAPYVIVEKTIKARELE. The Mg(2+) site is built by aspartate 284, glutamate 297, and asparagine 299.

The protein belongs to the D-alanine--D-alanine ligase family. Requires Mg(2+) as cofactor. Mn(2+) is required as a cofactor.

It localises to the cytoplasm. It carries out the reaction 2 D-alanine + ATP = D-alanyl-D-alanine + ADP + phosphate + H(+). The protein operates within cell wall biogenesis; peptidoglycan biosynthesis. In terms of biological role, cell wall formation. In Shewanella sp. (strain ANA-3), this protein is D-alanine--D-alanine ligase.